The sequence spans 526 residues: ATP-dependent RNA helicase dbp8 (526 aa).

The tract at residues 1–77 is disordered; the sequence is MTSPVPSEPV…DAKPAAPAGQ (77 aa). A compositionally biased stretch (polar residues) spans 17–31; it reads SSSGSEVEPSKTSTR. The short motif at 96–124 is the Q motif element; it reads SSFAALNVAPWLVGSLTTMAVRKPTAIQK. The Helicase ATP-binding domain maps to 127-306; the sequence is IPEILKGRDC…NMPRSANKPP (180 aa). Residue 140-147 participates in ATP binding; the sequence is SRTGSGKT. The short motif at 249–252 is the DEAD box element; the sequence is DEAD. The region spanning 338–485 is the Helicase C-terminal domain; that stretch reads AFLHVLLSTE…EWSEEGVSIE (148 aa).

This sequence belongs to the DEAD box helicase family. DDX49/DBP8 subfamily.

It localises to the nucleus. Its subcellular location is the nucleolus. It catalyses the reaction ATP + H2O = ADP + phosphate + H(+). Its function is as follows. ATP-binding RNA helicase involved in 40S ribosomal subunit biogenesis and is required for the normal formation of 18S rRNAs through pre-rRNA processing at A0, A1 and A2 sites. Required for vegetative growth. The polypeptide is ATP-dependent RNA helicase dbp8 (dbp8) (Aspergillus fumigatus (strain ATCC MYA-4609 / CBS 101355 / FGSC A1100 / Af293) (Neosartorya fumigata)).